Consider the following 181-residue polypeptide: Large ribosomal subunit protein uL6 (181 aa).

Belongs to the universal ribosomal protein uL6 family. As to quaternary structure, part of the 50S ribosomal subunit.

Functionally, this protein binds to the 23S rRNA, and is important in its secondary structure. It is located near the subunit interface in the base of the L7/L12 stalk, and near the tRNA binding site of the peptidyltransferase center. This chain is Large ribosomal subunit protein uL6, found in Desulforudis audaxviator (strain MP104C).